A 743-amino-acid chain; its full sequence is Putative metallophosphoesterase At3g03305 (743 aa).

Residues 1-40 (MESIGDDDELRSKTVSLPRRISFTILLLLLLISLSTRVSG) form the signal peptide. Residues Asp-66, His-68, and Asp-101 each coordinate a divalent metal cation. 5 consecutive transmembrane segments (helical) span residues 514-534 (ILWP…CIII), 565-585 (MPVV…FPWF), 623-643 (VMVV…LVVC), 687-704 (LFRK…WKHF), and 716-736 (MNVV…LYVI).

Belongs to the metallophosphoesterase superfamily. Requires a divalent metal cation as cofactor.

The protein localises to the membrane. The sequence is that of Putative metallophosphoesterase At3g03305 from Arabidopsis thaliana (Mouse-ear cress).